Consider the following 108-residue polypeptide: uncharacterized protein (108 aa).

The protein to M.jannaschii MJ1245 and M.thermoautotrophicum MTH1110.

This is an uncharacterized protein from Methanocaldococcus jannaschii (strain ATCC 43067 / DSM 2661 / JAL-1 / JCM 10045 / NBRC 100440) (Methanococcus jannaschii).